Consider the following 200-residue polypeptide: Pre-mRNA cleavage factor Im 25 kDa subunit 2 (200 aa).

In terms of domain architecture, Nudix hydrolase spans 45-172; that stretch reads GMRTSVEGIL…KLLAVPLFEL (128 aa). Positions 72-74 are interaction with RNA; it reads TFC. The Nudix box signature appears at 79-100; the sequence is GRLKPGENEADGLKRKLTSKLG.

It belongs to the Nudix hydrolase family. CPSF5 subfamily. As to quaternary structure, homodimer. Component of the cleavage factor Im (CFIm) complex. Forms a complex with cleavage and polyadenylation specificity factor (CPSF) subunits FIPS5, PAPS4 and CPSF30.

It localises to the nucleus. In terms of biological role, component of the cleavage factor Im (CFIm) complex that plays a key role in pre-mRNA 3'-processing. Involved in association with CPSF6 or CPSF7 in pre-MRNA 3'-end poly(A) site cleavage and poly(A) addition. NUDT21/CPSF5 binds to cleavage and polyadenylation RNA substrates. The homodimer mediates simultaneous sequence-specific recognition of two 5'-UGUA-3' elements within the pre-mRNA. Binds to, but does not hydrolyze mono- and di-adenosine nucleotides. May have a role in mRNA export. This chain is Pre-mRNA cleavage factor Im 25 kDa subunit 2, found in Arabidopsis thaliana (Mouse-ear cress).